Here is a 208-residue protein sequence, read N- to C-terminus: Large ribosomal subunit protein uL3 (208 aa).

Gln-150 bears the N5-methylglutamine mark.

This sequence belongs to the universal ribosomal protein uL3 family. Part of the 50S ribosomal subunit. Forms a cluster with proteins L14 and L19. In terms of processing, methylated by PrmB.

Its function is as follows. One of the primary rRNA binding proteins, it binds directly near the 3'-end of the 23S rRNA, where it nucleates assembly of the 50S subunit. The protein is Large ribosomal subunit protein uL3 of Buchnera aphidicola subsp. Cinara cedri (strain Cc).